The following is a 358-amino-acid chain: Probable dual-specificity RNA methyltransferase RlmN 2 (358 aa).

Residue Glu90 is the Proton acceptor of the active site. Residues 96 to 328 (SGIRRTVCVS…VNTCRYTKGD (233 aa)) enclose the Radical SAM core domain. Cys103 and Cys334 form a disulfide bridge. The [4Fe-4S] cluster site is built by Cys110, Cys114, and Cys117. S-adenosyl-L-methionine is bound by residues 160-161 (GE), Ser192, 215-217 (SLH), and Asn291. Residue Cys334 is the S-methylcysteine intermediate of the active site.

This sequence belongs to the radical SAM superfamily. RlmN family. [4Fe-4S] cluster serves as cofactor.

The protein localises to the cytoplasm. It carries out the reaction adenosine(2503) in 23S rRNA + 2 reduced [2Fe-2S]-[ferredoxin] + 2 S-adenosyl-L-methionine = 2-methyladenosine(2503) in 23S rRNA + 5'-deoxyadenosine + L-methionine + 2 oxidized [2Fe-2S]-[ferredoxin] + S-adenosyl-L-homocysteine. The enzyme catalyses adenosine(37) in tRNA + 2 reduced [2Fe-2S]-[ferredoxin] + 2 S-adenosyl-L-methionine = 2-methyladenosine(37) in tRNA + 5'-deoxyadenosine + L-methionine + 2 oxidized [2Fe-2S]-[ferredoxin] + S-adenosyl-L-homocysteine. Functionally, specifically methylates position 2 of adenine 2503 in 23S rRNA and position 2 of adenine 37 in tRNAs. This chain is Probable dual-specificity RNA methyltransferase RlmN 2, found in Protochlamydia amoebophila (strain UWE25).